The chain runs to 152 residues: D-aminoacyl-tRNA deacylase (152 aa).

The short motif at 137-138 (GP) is the Gly-cisPro motif, important for rejection of L-amino acids element.

The protein belongs to the DTD family. As to quaternary structure, homodimer.

It is found in the cytoplasm. The enzyme catalyses glycyl-tRNA(Ala) + H2O = tRNA(Ala) + glycine + H(+). It carries out the reaction a D-aminoacyl-tRNA + H2O = a tRNA + a D-alpha-amino acid + H(+). An aminoacyl-tRNA editing enzyme that deacylates mischarged D-aminoacyl-tRNAs. Also deacylates mischarged glycyl-tRNA(Ala), protecting cells against glycine mischarging by AlaRS. Acts via tRNA-based rather than protein-based catalysis; rejects L-amino acids rather than detecting D-amino acids in the active site. By recycling D-aminoacyl-tRNA to D-amino acids and free tRNA molecules, this enzyme counteracts the toxicity associated with the formation of D-aminoacyl-tRNA entities in vivo and helps enforce protein L-homochirality. This Methylibium petroleiphilum (strain ATCC BAA-1232 / LMG 22953 / PM1) protein is D-aminoacyl-tRNA deacylase.